A 1026-amino-acid chain; its full sequence is MSTFLRAVRDNIPEKDKSELTENDLKKWGLGAIHLRPYQLDGVKWLSLCMKNQQGCILGDEMGLGKTCQTISLLAYARGSLKMNGPFLVLCPLAVLENWRQELERFCPSLSVICYTGDKEKRAELQQNLKSDPRFHVLLTTYEMCLKDARYLKSWKWKILVVDEAHRLKNQESLLHQTLKEFTVGFRVLLTGTPIQNNLQEVYSLLTFIQPSVFLPEAVEDFVNAYADIQTEPALVDELHQVLQPFLLRRVKAEVAAELPKKTELVVFHGLSALQKRYYKAILMRDLDAFRTDQSTKTRLLNVLMQLRKCVDHPYLFDGVEPEPFEMGEHLVEASGKLSLLDSMLAYLQEGGHHVLLFSQMTRMLDILQDYLEYRGYSYERLDGSVRGEERNLAIKNFSTKDVFIFLLSTKAGGVGMNLTAADTVIFVDGDFNPQNDLQAAARAHRIGQTRPVKVIRLLGRDTIEEIIYSRAVSKLRLTDTVIEEGRFSLLDQAQSAASGLQLSEILKFGVDKLLSSEESSVQDVDLQLILGQSRDGQWLTDEEHAKLNESNEEEDEDMEGQNHMYYFEGKDYSKDPSAEDEKTFELLLEKQFAEMEDAEKEGRALRNKAGVSLSGPLINPARKKRPLTEAELEERRQKRQAAAAKRAKLQEERKKQQEELNYKKKMAWWDSCGYRSLCLPRVDSEGEDMEPDEDDHVSFSSTDSDHTAIRYVLGDVTHPQADREDAIIVHCVDDSGHWGRGGLFTALGLRSDEPRKQYELAGDMKDLELGNVLLFPVDDKQSRLCGRDYLALIVAQQRDKANKLSGIRLTALDEGLKKIYKAAKQKKASVHLPRIGHSTKGFNWYGTERLIRKHLATRGIFTSIYYYRRGSSHATVSSTASTTTPSSSKPAASSPSESPHSSSPPANREGLTKSAELSTTSHEGPGAPGLADFMRGVHVYFYNMAATEKKKLTRYLITYDGDEEDLMSSHVTHIVGEVESPVHKQELQDLLHQYPQALLVKKNWLESCFASQRKVSVSKYVIRLT.

Positions serine 47 to serine 212 constitute a Helicase ATP-binding domain. Aspartate 60–threonine 67 contributes to the ATP binding site. The short motif at aspartate 163–histidine 166 is the DEAH box element. The region spanning leucine 340–alanine 494 is the Helicase C-terminal domain. Residues leucine 540–alanine 668 are a coiled coil. The segment at alanine 594 to leucine 628 is regulatory linker segment (RLS). A disordered region spans residues leucine 606–lysine 655. A required for ATPase activity region spans residues asparagine 608–lysine 666. The region spanning histidine 697 to arginine 870 is the Macro domain. Over residues valine 877 to alanine 907 the composition is skewed to low complexity. The segment at valine 877–proline 929 is disordered. In terms of domain architecture, BRCT spans glycine 930–isoleucine 1023.

Belongs to the SNF2/RAD54 helicase family. Interacts with nucleosomes; interacts with the acidic patch of histones.

The protein resides in the nucleus. The protein localises to the chromosome. It catalyses the reaction ATP + H2O = ADP + phosphate + H(+). Adopts an inactive conformation in absence of DNA damage. Binding to poly-ADP-ribosylated histones activates the ATP-dependent chromatin remodeler activity. Its function is as follows. ATP-dependent chromatin remodeler that mediates chromatin-remodeling following DNA damage. Recruited to DNA damage sites through interaction with poly-ADP-ribose: specifically recognizes and binds histones that are poly-ADP-ribosylated on serine residues in response to DNA damage. Poly-ADP-ribose-binding activates the ATP-dependent chromatin remodeler activity, thereby regulating chromatin during DNA repair. Catalyzes nucleosome sliding away from DNA breaks in an ATP-dependent manner. In Danio rerio (Zebrafish), this protein is Chromodomain-helicase-DNA-binding protein 1-like (chd1l).